Reading from the N-terminus, the 217-residue chain is MSIGLIGRKCGMTRIFTETGSSIPVTVVEVILNRITQVKTVETDGYRAFQVAYGKKSSARVNKPLAGHYSKAAVEAGNALREFRLGNEELTEAKAGDELKVDIFKEGQVVDVRGLTRGKGFAGTVKRHNFRTQDATHGNSLSHRAPGSIGQCQTPGRVWKGKKMAGQLGNVYCTVQSQEIIKVDVERNLLLIKGALPGAPGGEVIITQSSKKRKEDK.

The disordered stretch occupies residues 135–154 (ATHGNSLSHRAPGSIGQCQT). An N5-methylglutamine modification is found at Gln-153.

It belongs to the universal ribosomal protein uL3 family. In terms of assembly, part of the 50S ribosomal subunit. Forms a cluster with proteins L14 and L19. Post-translationally, methylated by PrmB.

One of the primary rRNA binding proteins, it binds directly near the 3'-end of the 23S rRNA, where it nucleates assembly of the 50S subunit. In Coxiella burnetii (strain CbuG_Q212) (Coxiella burnetii (strain Q212)), this protein is Large ribosomal subunit protein uL3.